Consider the following 180-residue polypeptide: Meiotic recombination protein rec15 (180 aa).

Homomer. Interacts (via C-terminus) with hop1 (via C-terminus); the interaction is direct. Interacts (via C-terminus) with rec10; the interaction is direct. Interacts with mde2; the interaction is direct.

It is found in the nucleus. The protein resides in the chromosome. Functionally, required during the early stages of meiosis for meiotic recombination. This chain is Meiotic recombination protein rec15, found in Schizosaccharomyces pombe (strain 972 / ATCC 24843) (Fission yeast).